A 33-amino-acid polypeptide reads, in one-letter code: uncharacterized protein (33 aa).

This is an uncharacterized protein from Staphylococcus aureus (strain MW2).